Consider the following 172-residue polypeptide: Small ribosomal subunit protein bS16 (172 aa).

Residues 125–172 (KKRKAKEEAEAKAAAEKAAEEAAAAEAAKAEEEAAKAEEADSAEESAE) are disordered. Basic and acidic residues-rich tracts occupy residues 129–144 (AKEEAEAKAAAEKAAE) and 152–163 (AKAEEEAAKAEE).

It belongs to the bacterial ribosomal protein bS16 family.

The chain is Small ribosomal subunit protein bS16 from Corynebacterium aurimucosum (strain ATCC 700975 / DSM 44827 / CIP 107346 / CN-1) (Corynebacterium nigricans).